A 782-amino-acid chain; its full sequence is Endonuclease MutS2 (782 aa).

336–343 is an ATP binding site; the sequence is GPNTGGKT. The region spanning 707–782 is the Smr domain; sequence LDLRGYRYED…GFGVTVATLK (76 aa).

This sequence belongs to the DNA mismatch repair MutS family. MutS2 subfamily. As to quaternary structure, homodimer. Binds to stalled ribosomes, contacting rRNA.

Endonuclease that is involved in the suppression of homologous recombination and thus may have a key role in the control of bacterial genetic diversity. Functionally, acts as a ribosome collision sensor, splitting the ribosome into its 2 subunits. Detects stalled/collided 70S ribosomes which it binds and splits by an ATP-hydrolysis driven conformational change. Acts upstream of the ribosome quality control system (RQC), a ribosome-associated complex that mediates the extraction of incompletely synthesized nascent chains from stalled ribosomes and their subsequent degradation. Probably generates substrates for RQC. The chain is Endonuclease MutS2 from Staphylococcus aureus (strain JH1).